The chain runs to 357 residues: tRNA-specific 2-thiouridylase MnmA (357 aa).

ATP-binding positions include 7-14 (GLSGGVDS) and methionine 33. The interval 94–96 (NPD) is interaction with target base in tRNA. Cysteine 99 functions as the Nucleophile in the catalytic mechanism. Cysteine 99 and cysteine 195 are joined by a disulfide. Residue glycine 123 participates in ATP binding. The tract at residues 145–147 (KDQ) is interaction with tRNA. The Cysteine persulfide intermediate role is filled by cysteine 195. An interaction with tRNA region spans residues 303–304 (RY).

It belongs to the MnmA/TRMU family.

The protein resides in the cytoplasm. It carries out the reaction S-sulfanyl-L-cysteinyl-[protein] + uridine(34) in tRNA + AH2 + ATP = 2-thiouridine(34) in tRNA + L-cysteinyl-[protein] + A + AMP + diphosphate + H(+). In terms of biological role, catalyzes the 2-thiolation of uridine at the wobble position (U34) of tRNA, leading to the formation of s(2)U34. This chain is tRNA-specific 2-thiouridylase MnmA, found in Akkermansia muciniphila (strain ATCC BAA-835 / DSM 22959 / JCM 33894 / BCRC 81048 / CCUG 64013 / CIP 107961 / Muc).